A 499-amino-acid chain; its full sequence is MARQEQTMNDQLKVRREKMDELREEGIDPFGHRFERTDLAQDLQDKYGDMDKDELDAKQVVATIAGRMLAKRGKGKVGFADIWDRSGKMQLYIRKDVVGEDTYHIFKRSDIGDFLGITGQVFKTDFGELTIKVTGLTFLSKALRPLPDKFHGLQNVEQIYRQRYLDLISNRDSFDRFLKRTKIISAIRHHLDDQGFTEVETPMLHNQAGGAAARPFVTHHNALNIDLYLRIALELHLKRLIVGGMEKVYEIGRVFRNEGMDREHNPEFTMMETYVAYFDFHDVMAETEGIFKAAAQAVTDDGIVTYHDQKVDFNQPFKQIHMVDAIKEKTGIDFWQPMSIEDAQKLADEHHVKYEPYWKVGHIINAFFEEFVEDTLNEPTFVYGHPVEISPLAKKNEEDPRFTDRFELFILGNEYANAFSELNDPIDQRQRFEAQAAERTAGNDEAEHIDEDFVEALEYGMPPTGGLGIGIDRLVMLMTDADSIRDVLLFPTMRPEEDK.

2 residues coordinate Mg(2+): E407 and E414.

The protein belongs to the class-II aminoacyl-tRNA synthetase family. In terms of assembly, homodimer. Mg(2+) serves as cofactor.

Its subcellular location is the cytoplasm. It catalyses the reaction tRNA(Lys) + L-lysine + ATP = L-lysyl-tRNA(Lys) + AMP + diphosphate. The protein is Lysine--tRNA ligase of Lactiplantibacillus plantarum (strain ATCC BAA-793 / NCIMB 8826 / WCFS1) (Lactobacillus plantarum).